We begin with the raw amino-acid sequence, 337 residues long: uncharacterized protein (337 aa).

The 49-residue stretch at 12 to 60 folds into the F-box domain; it reads SLNYVDLPDTVHRKIFEYLNPWEIFKLSRISKAIHVTILKNKKFAVKDI.

This is an uncharacterized protein from Caenorhabditis elegans.